The following is a 361-amino-acid chain: G-protein coupled receptor 68 (361 aa).

Topologically, residues 1 to 12 are extracellular; that stretch reads MGNITADNTSMN. 2 N-linked (GlcNAc...) asparagine glycosylation sites follow: Asn3 and Asn8. A helical transmembrane segment spans residues 13–49; it reads CDIDHTIHQTLAPVVYVMVLVVGFPANCLSLYYGYLQ. 2 disulfides stabilise this stretch: Cys13/Cys258 and Cys94/Cys172. At 50–53 the chain is on the cytoplasmic side; the sequence is IKAR. The chain crosses the membrane as a helical span at residues 54 to 84; it reads NELGVYLCNLTVADLFYICSLPFWLQYVLQH. Residues 85–89 lie on the Extracellular side of the membrane; sequence DHWSH. A helical membrane pass occupies residues 90 to 125; sequence DDLSCQVCGILLYENIYISVGFLCCISIDRYLAVAH. Over 126–133 the chain is Cytoplasmic; that stretch reads PFRFHQFR. A helical membrane pass occupies residues 134 to 160; it reads TLKAAMGVSALIWVKELLTSIYFLMHE. The Extracellular segment spans residues 161-176; that stretch reads EVVEDADRHRVCFEHY. Residues 161 to 176 are extracellular loop 2 (ECL2); the sequence is EVVEDADRHRVCFEHY. The helical transmembrane segment at 177-214 threads the bilayer; it reads PLEPRQRGINYYRFLVGFLFPICLLLASYRGILRAVRR. Over 215-218 the chain is Cytoplasmic; that stretch reads SHGT. A helical membrane pass occupies residues 219–254; that stretch reads QKSRKDQIQRLVLSTVVIFLACFLPYHVLLLVRSLW. Residues 255 to 260 are Extracellular-facing; the sequence is ESSCDF. Residues 261 to 289 form a helical membrane-spanning segment; that stretch reads AKGIFNAYHFSLLLTSFNCVADPVLYCFV. Residues 290 to 361 are Cytoplasmic-facing; sequence SETTHRDLAR…MGGSPAGGLS (72 aa). Residues 340 to 361 form a disordered region; it reads LHPAFQTPHPPGMGGSPAGGLS. Positions 351–361 are enriched in gly residues; it reads GMGGSPAGGLS.

Belongs to the G-protein coupled receptor 1 family.

Its subcellular location is the cell membrane. Activated by a network of residues that connects an extracellular-facing cavity to Glu-149, a conserved charged residue buried in the transmembrane core of the receptor. Protonation likely drives conformational changes in extracellular loop 2 (ECL2), which stabilizes movement of transmembrane 3 (TM3) and a series of rearrangements that connect the extracellular-facing cavity to Glu-149, a residue only conserved in proton-sensing G-protein coupled receptors. Activated in an allosteric manner by divalent metal ions at the extracellular surface following the order: Cd(2+) &gt; Co(2+) &gt; Ni(2+) &gt; Zn(2+) &gt; Fe(2+) &gt; Ca(2+) &gt; Mg(2+). Its function is as follows. Proton-sensing G-protein coupled receptor activated by extracellular pH, which is required to monitor pH changes and generate adaptive reactions. The receptor is almost silent at pH 7.8 but fully activated at pH 6.8. Ligand binding causes a conformation change that triggers signaling via guanine nucleotide-binding proteins (G proteins) and modulates the activity of downstream effectors, such as phospholipase C. GPR68 is mainly coupled to G(q) G proteins and mediates production of diacylglycerol (DAG) and inositol 1,4,5-trisphosphate (IP3). Acts as a key mechanosensor of fluid shear stress and membrane stretch. Expressed in endothelial cells of small-diameter resistance arteries, where it mediates flow-induced dilation in response to shear stress. May represents an osteoblastic pH sensor regulating cell-mediated responses to acidosis in bone. Acts as a regulator of calcium-sensing receptor CASR in a seesaw manner: GPR68-mediated signaling inhibits CASR signaling in response to protons, while CASR inhibits GPR68 in presence of extracellular calcium. This Bos taurus (Bovine) protein is G-protein coupled receptor 68 (GPR68).